We begin with the raw amino-acid sequence, 412 residues long: 1-deoxy-D-xylulose 5-phosphate reductoisomerase (412 aa).

Positions 5, 6, 7, 8, 31, 33, and 125 each coordinate NADPH. Lys-126 provides a ligand contact to 1-deoxy-D-xylulose 5-phosphate. Position 127 (Glu-127) interacts with NADPH. Mn(2+) is bound at residue Asp-151. Ser-152, Glu-153, Ser-189, and His-212 together coordinate 1-deoxy-D-xylulose 5-phosphate. Glu-153 contacts Mn(2+). Position 218 (Gly-218) interacts with NADPH. Residues Ser-225, Asn-230, Lys-231, and Glu-234 each coordinate 1-deoxy-D-xylulose 5-phosphate. Residue Glu-234 coordinates Mn(2+).

It belongs to the DXR family. Requires Mg(2+) as cofactor. The cofactor is Mn(2+).

It carries out the reaction 2-C-methyl-D-erythritol 4-phosphate + NADP(+) = 1-deoxy-D-xylulose 5-phosphate + NADPH + H(+). It functions in the pathway isoprenoid biosynthesis; isopentenyl diphosphate biosynthesis via DXP pathway; isopentenyl diphosphate from 1-deoxy-D-xylulose 5-phosphate: step 1/6. Functionally, catalyzes the NADPH-dependent rearrangement and reduction of 1-deoxy-D-xylulose-5-phosphate (DXP) to 2-C-methyl-D-erythritol 4-phosphate (MEP). The sequence is that of 1-deoxy-D-xylulose 5-phosphate reductoisomerase from Prochlorococcus marinus (strain MIT 9313).